The following is a 335-amino-acid chain: Homeobox protein DBX1 (335 aa).

Disordered regions lie at residues 58 to 102 (IPAA…LSPA) and 240 to 335 (KERE…ITVS). Positions 83–95 (GSPGSGSRRGSSP) are enriched in low complexity. Positions 181–240 (GMLRRAVFSDVQRKALEKTFQKQKYISKPDRKKLASKLGLKDSQVKIWFQNRRMKWRNSK) form a DNA-binding region, homeobox. Positions 299–317 (GPLPASPAHSSSPGKPSDF) are enriched in low complexity. A compositionally biased stretch (acidic residues) spans 318 to 335 (SDSDEDEEGEEDEEITVS).

This sequence belongs to the H2.0 homeobox family.

It is found in the nucleus. In terms of biological role, could have a role in patterning the central nervous system during embryogenesis. Has a key role in regulating the distinct phenotypic features that distinguish two major classes of ventral interneurons, V0 and V1 neurons. Regulates the transcription factor profile, neurotransmitter phenotype, intraspinal migratory path and axonal trajectory of V0 neurons, features that differentiate them from an adjacent set of V1 neurons. The sequence is that of Homeobox protein DBX1 (Dbx1) from Mus musculus (Mouse).